The primary structure comprises 310 residues: MSNKNKKIVQGEEDEEEDDLYDDYDDKPKTTTTTTTSTSMNKSDSNISLNKEMLINDHPEDLIVGANSPLNVSVTTTPIENINENPSPVNLDEQTQQTQPQQNPISPITPLSSSSPSSSTTTTTITNSAVSPSNILITPTQSPIEIKPIIETQQPLPSPPQQGPSPIILQHQQQQQPLQSQYITPPIPQPQYQPIASQQSQQPQQIPTRKLSGSQMLPQRIPLSLGENKLKEFNENLRKSYCTKTHMLYYSINKEVSGANQHLTGVIDLIKSVQHNIRQYNDDILTLEEKLEQTEWSLQYYFNNNSNNNS.

Disordered regions lie at residues 1–53, 78–127, and 153–217; these read MSNK…NKEM, PIEN…TITN, and QQPL…SQML. The segment covering 11–25 has biased composition (acidic residues); that stretch reads GEEDEEEDDLYDDYD. 2 stretches are compositionally biased toward polar residues: residues 37–49 and 78–88; these read STSM…NISL and PIENINENPSP. 3 stretches are compositionally biased toward low complexity: residues 94–126, 164–184, and 192–208; these read QTQQ…TTIT, PSPI…QYIT, and YQPI…QIPT. Positions 268–299 form a coiled coil; sequence DLIKSVQHNIRQYNDDILTLEEKLEQTEWSLQ.

This is an uncharacterized protein from Dictyostelium discoideum (Social amoeba).